A 363-amino-acid polypeptide reads, in one-letter code: tRNA-specific 2-thiouridylase MnmA (363 aa).

Residues 13-20 and methionine 39 contribute to the ATP site; that span reads GLSGGVDS. The interval 99–101 is interaction with target base in tRNA; sequence NPD. The active-site Nucleophile is cysteine 104. A disulfide bond links cysteine 104 and cysteine 200. Position 128 (glycine 128) interacts with ATP. Positions 150–152 are interaction with tRNA; that stretch reads KDQ. The active-site Cysteine persulfide intermediate is cysteine 200. An interaction with tRNA region spans residues 310-311; that stretch reads RY.

It belongs to the MnmA/TRMU family.

Its subcellular location is the cytoplasm. It carries out the reaction S-sulfanyl-L-cysteinyl-[protein] + uridine(34) in tRNA + AH2 + ATP = 2-thiouridine(34) in tRNA + L-cysteinyl-[protein] + A + AMP + diphosphate + H(+). In terms of biological role, catalyzes the 2-thiolation of uridine at the wobble position (U34) of tRNA, leading to the formation of s(2)U34. This chain is tRNA-specific 2-thiouridylase MnmA, found in Ruthia magnifica subsp. Calyptogena magnifica.